We begin with the raw amino-acid sequence, 161 residues long: uncharacterized protein (161 aa).

Residues 5-25 traverse the membrane as a helical segment; that stretch reads GPTLLSLLAALLVSLGLLLWY.

Belongs to the IIV-6 203L/325L family.

It localises to the membrane. This is an uncharacterized protein from Invertebrate iridescent virus 3 (IIV-3).